The chain runs to 362 residues: Flotillin-like protein FloA 2 (362 aa).

Residues 24-44 (TALLIGALVIFAGIVVVLFIF) traverse the membrane as a helical segment.

The protein belongs to the flotillin-like FloA family. Homooligomerizes.

The protein localises to the cell membrane. It localises to the membrane raft. Its function is as follows. Found in functional membrane microdomains (FMM) that may be equivalent to eukaryotic membrane rafts. FMMs are highly dynamic and increase in number as cells age. Flotillins are thought to be important factors in membrane fluidity. This is Flotillin-like protein FloA 2 from Rhodopirellula baltica (strain DSM 10527 / NCIMB 13988 / SH1).